The following is a 418-amino-acid chain: Gamma-glutamyl phosphate reductase (418 aa).

The protein belongs to the gamma-glutamyl phosphate reductase family.

Its subcellular location is the cytoplasm. The enzyme catalyses L-glutamate 5-semialdehyde + phosphate + NADP(+) = L-glutamyl 5-phosphate + NADPH + H(+). The protein operates within amino-acid biosynthesis; L-proline biosynthesis; L-glutamate 5-semialdehyde from L-glutamate: step 2/2. Its function is as follows. Catalyzes the NADPH-dependent reduction of L-glutamate 5-phosphate into L-glutamate 5-semialdehyde and phosphate. The product spontaneously undergoes cyclization to form 1-pyrroline-5-carboxylate. This is Gamma-glutamyl phosphate reductase from Moorella thermoacetica (strain ATCC 39073 / JCM 9320).